Consider the following 88-residue polypeptide: UPF0297 protein EAT1b_2723 (88 aa).

This sequence belongs to the UPF0297 family.

This is UPF0297 protein EAT1b_2723 from Exiguobacterium sp. (strain ATCC BAA-1283 / AT1b).